A 798-amino-acid polypeptide reads, in one-letter code: MSNAINQNGTGLEQQVAGLDLNGGSADYSGPITSKTSTNSVTGGVYVPPHLRGGGGNNNAADAESQGQGQGQGQGFDSRSGNPRQETRDPQQSRGGGGEYRRGGGGGGRGFNRQSGDYGYGSGGGGRRGGGGRFEDNYNGGEFDSRRGGDWNRSGGGGGGGRGFGRGPSYRGGGGGSGSNLNEQTAEDGQAQQQQQPRNDRWQEPERPAGFDGSEGGQSAGGNRSYNNRGERGGGGYNSRWKEGGGSNVDYTKLGARDERLEVELFGVGNTGINFDKYEDIPVEATGQNVPPNITSFDDVQLTEIIRNNVALARYDKPTPVQKHAIPIIINGRDLMACAQTGSGKTAAFLVPILNQMYELGHVPPPQSTRQYSRRKQYPLGLVLAPTRELATQIFEEAKKFAYRSRMRPAVLYGGNNTSEQMRELDRGCHLIVATPGRLEDMITRGKVGLENIRFLVLDEADRMLDMGFEPQIRRIVEQLNMPPTGQRQTLMFSATFPKQIQELASDFLSNYIFLAVGRVGSTSENITQTILWVYEPDKRSYLLDLLSSIRDGPEYTKDSLTLIFVETKKGADSLEEFLYQCNHPVTSIHGDRTQKEREEALRCFRSGDCPILVATAVAARGLDIPHVKHVINFDLPSDVEEYVHRIGRTGRMGNLGVATSFFNEKNRNICSDLLELLIETKQEIPSFMEDMSSDRGHGGAKRAGRGGGGRYGGGFGSRDYRQSSGGGGGGRSGPPPRSGGSGSGGGGGSYRSNGNSYGGNSGGGGYYGGGAGGGSYGGSYGGGSASHSSNAPDWWAQ.

The tract at residues 16 to 248 (VAGLDLNGGS…SRWKEGGGSN (233 aa)) is disordered. A compositionally biased stretch (polar residues) spans 31–42 (PITSKTSTNSVT). 3 stretches are compositionally biased toward gly residues: residues 94 to 110 (RGGGGEYRRGGGGGGRG), 118 to 132 (YGYGSGGGGRRGGGG), and 154 to 178 (SGGGGGGGRGFGRGPSYRGGGGGSG). Phosphoserine is present on residues S177 and S179. Positions 198-209 (RNDRWQEPERPA) are enriched in basic and acidic residues. Residues S214 and S219 each carry the phosphoserine modification. A Q motif motif is present at residues 295–323 (TSFDDVQLTEIIRNNVALARYDKPTPVQK). Residues 315 to 322 (YDKPTPVQ) and 339 to 346 (AQTGSGKT) each bind ATP. The Helicase ATP-binding domain maps to 326–515 (IPIIINGRDL…SDFLSNYIFL (190 aa)). Positions 459-462 (DEAD) match the DEAD box motif. One can recognise a Helicase C-terminal domain in the interval 542–693 (YLLDLLSSIR…EIPSFMEDMS (152 aa)). S638 bears the Phosphoserine mark. 2 disordered regions span residues 689-765 (MEDM…SGGG) and 778-798 (GGSYGGGSASHSSNAPDWWAQ). 2 stretches are compositionally biased toward gly residues: residues 706 to 717 (RGGGGRYGGGFG) and 740 to 750 (GGSGSGGGGGS).

It belongs to the DEAD box helicase family. DDX3/DED1 subfamily. In terms of tissue distribution, vas and bel colocalize in nuage (perinuclear, electron-dense granules in germline cells) and at the oocyte posterior during oogenesis.

Its subcellular location is the cytoplasm. The enzyme catalyses ATP + H2O = ADP + phosphate + H(+). Its function is as follows. ATP-dependent RNA helicase that is essential and required for cellular function, larval growth, and for male and female fertility. Also required for RNA interference (RNAi), double-stranded RNA induces potent and specific gene silencing, by acting downstream of dsRNA internalization. RNAi is mediated by the RNA-induced silencing complex (RISC), a sequence-specific, multicomponent nuclease that destroys or silences messenger RNAs homologous to the silencing trigger. In Drosophila melanogaster (Fruit fly), this protein is ATP-dependent RNA helicase bel.